The primary structure comprises 699 residues: Elongation factor G (699 aa).

The 276-residue stretch at Glu8–Ile283 folds into the tr-type G domain. Residues Ala17–Thr24, Asp81–His85, and Asn135–Asp138 contribute to the GTP site.

Belongs to the TRAFAC class translation factor GTPase superfamily. Classic translation factor GTPase family. EF-G/EF-2 subfamily.

Its subcellular location is the cytoplasm. Its function is as follows. Catalyzes the GTP-dependent ribosomal translocation step during translation elongation. During this step, the ribosome changes from the pre-translocational (PRE) to the post-translocational (POST) state as the newly formed A-site-bound peptidyl-tRNA and P-site-bound deacylated tRNA move to the P and E sites, respectively. Catalyzes the coordinated movement of the two tRNA molecules, the mRNA and conformational changes in the ribosome. This Rickettsia felis (strain ATCC VR-1525 / URRWXCal2) (Rickettsia azadi) protein is Elongation factor G.